The chain runs to 277 residues: L-aspartate oxidase (277 aa).

Arg23 acts as the Proton donor/acceptor in catalysis. FAD-binding positions include Glu106 and 122–123; that span reads SL. Disordered regions lie at residues 142 to 161 and 234 to 277; these read LRRG…PPPA and DYPA…ETRS. Residues 146–161 are compositionally biased toward pro residues; it reads WPPPAPPDLSPRPPPA.

This sequence belongs to the FAD-dependent oxidoreductase 2 family. NadB subfamily. It depends on FAD as a cofactor.

It is found in the cytoplasm. It carries out the reaction L-aspartate + O2 = iminosuccinate + H2O2. Its pathway is cofactor biosynthesis; NAD(+) biosynthesis; iminoaspartate from L-aspartate (oxidase route): step 1/1. Functionally, catalyzes the oxidation of L-aspartate to iminoaspartate, the first step in the de novo biosynthesis of NAD(+). The chain is L-aspartate oxidase (nadB) from Rhodospirillum rubrum.